A 449-amino-acid polypeptide reads, in one-letter code: Chromosomal replication initiator protein DnaA (449 aa).

The domain I, interacts with DnaA modulators stretch occupies residues 1 to 75 (MDTNNDIEKR…EILSQNKVGM (75 aa)). Residues 75–106 (MHLAHSVDVRIEVASKVHVSDHSNINYKATKS) are domain II. The tract at residues 107–321 (SIKDSYTFEN…GAIIKISVNA (215 aa)) is domain III, AAA+ region. Residues Gly-151, Gly-153, Lys-154, and Thr-155 each contribute to the ATP site. Positions 322-449 (NLMNAPIDLN…LNELNDKKQH (128 aa)) are domain IV, binds dsDNA.

This sequence belongs to the DnaA family. In terms of assembly, oligomerizes as a right-handed, spiral filament on DNA at oriC.

Its subcellular location is the cytoplasm. In terms of biological role, plays an essential role in the initiation and regulation of chromosomal replication. ATP-DnaA binds to the origin of replication (oriC) to initiate formation of the DNA replication initiation complex once per cell cycle. Binds the DnaA box (a 9 base pair repeat at the origin) and separates the double-stranded (ds)DNA. Forms a right-handed helical filament on oriC DNA; dsDNA binds to the exterior of the filament while single-stranded (ss)DNA is stabiized in the filament's interior. The ATP-DnaA-oriC complex binds and stabilizes one strand of the AT-rich DNA unwinding element (DUE), permitting loading of DNA polymerase. After initiation quickly degrades to an ADP-DnaA complex that is not apt for DNA replication. Binds acidic phospholipids. This chain is Chromosomal replication initiator protein DnaA, found in Helicobacter acinonychis (strain Sheeba).